The following is a 522-amino-acid chain: 2-isopropylmalate synthase (522 aa).

A Pyruvate carboxyltransferase domain is found at 5–267 (VIIFDTTLRD…DCGINAKEIH (263 aa)). Residues D14, H202, H204, and N238 each contribute to the Mn(2+) site. Positions 392–522 (QLQHMMVHSD…IHKERELGGV (131 aa)) are regulatory domain.

It belongs to the alpha-IPM synthase/homocitrate synthase family. LeuA type 1 subfamily. As to quaternary structure, homodimer. It depends on Mn(2+) as a cofactor.

Its subcellular location is the cytoplasm. It carries out the reaction 3-methyl-2-oxobutanoate + acetyl-CoA + H2O = (2S)-2-isopropylmalate + CoA + H(+). It participates in amino-acid biosynthesis; L-leucine biosynthesis; L-leucine from 3-methyl-2-oxobutanoate: step 1/4. Catalyzes the condensation of the acetyl group of acetyl-CoA with 3-methyl-2-oxobutanoate (2-ketoisovalerate) to form 3-carboxy-3-hydroxy-4-methylpentanoate (2-isopropylmalate). The protein is 2-isopropylmalate synthase of Shewanella frigidimarina (strain NCIMB 400).